Reading from the N-terminus, the 311-residue chain is tRNA pseudouridine synthase B (311 aa).

Asp-39 acts as the Nucleophile in catalysis. A disordered region spans residues 237–268 (RELSEQETTEISFGRRIAAGPGAGTPDAATAE). A compositionally biased stretch (low complexity) spans 254-268 (AAGPGAGTPDAATAE).

The protein belongs to the pseudouridine synthase TruB family. Type 1 subfamily.

It catalyses the reaction uridine(55) in tRNA = pseudouridine(55) in tRNA. Functionally, responsible for synthesis of pseudouridine from uracil-55 in the psi GC loop of transfer RNAs. The chain is tRNA pseudouridine synthase B from Paenarthrobacter aurescens (strain TC1).